Reading from the N-terminus, the 214-residue chain is Holliday junction branch migration complex subunit RuvA (214 aa).

Positions 1 to 63 (MISFLRGTVA…EDSLTLFGFS (63 aa)) are domain I. Residues 64–142 (SDDEREVFDV…PHGTGAAAAP (79 aa)) are domain II. The interval 143–153 (AAAASAPWKPQ) is flexible linker. Residues 153–214 (QVVAAMTSLG…RAGNRVGSRG (62 aa)) form a domain III region.

This sequence belongs to the RuvA family. As to quaternary structure, homotetramer. Forms an RuvA(8)-RuvB(12)-Holliday junction (HJ) complex. HJ DNA is sandwiched between 2 RuvA tetramers; dsDNA enters through RuvA and exits via RuvB. An RuvB hexamer assembles on each DNA strand where it exits the tetramer. Each RuvB hexamer is contacted by two RuvA subunits (via domain III) on 2 adjacent RuvB subunits; this complex drives branch migration. In the full resolvosome a probable DNA-RuvA(4)-RuvB(12)-RuvC(2) complex forms which resolves the HJ.

It localises to the cytoplasm. The RuvA-RuvB-RuvC complex processes Holliday junction (HJ) DNA during genetic recombination and DNA repair, while the RuvA-RuvB complex plays an important role in the rescue of blocked DNA replication forks via replication fork reversal (RFR). RuvA specifically binds to HJ cruciform DNA, conferring on it an open structure. The RuvB hexamer acts as an ATP-dependent pump, pulling dsDNA into and through the RuvAB complex. HJ branch migration allows RuvC to scan DNA until it finds its consensus sequence, where it cleaves and resolves the cruciform DNA. This Arthrobacter sp. (strain FB24) protein is Holliday junction branch migration complex subunit RuvA.